The primary structure comprises 64 residues: Large ribosomal subunit protein bL35 (64 aa).

It belongs to the bacterial ribosomal protein bL35 family.

This is Large ribosomal subunit protein bL35 from Lactiplantibacillus plantarum (strain ATCC BAA-793 / NCIMB 8826 / WCFS1) (Lactobacillus plantarum).